The sequence spans 555 residues: Poly(A) polymerase PAPa (555 aa).

Residues 1 to 20 are disordered; it reads MNNQAYGVTPPISVANSTPK. Residues 86–88, 99–101, Asp-153, Lys-214, Tyr-223, and 232–233 each bind ATP; these read FGS, DID, and GV. Residues Asp-99, Asp-101, and Asp-153 each coordinate Mg(2+). The interval 532–555 is disordered; sequence KRKRAVSKNEGKKKPKSVGTVSAA.

The protein belongs to the poly(A) polymerase family. Requires Mg(2+) as cofactor. Mn(2+) is required as a cofactor.

It is found in the nucleus. The enzyme catalyses RNA(n) + ATP = RNA(n)-3'-adenine ribonucleotide + diphosphate. Functionally, polymerase that creates the 3'-poly(A) tail of mRNA's. May acquire specificity through interaction with a cleavage and polyadenylation factor. The chain is Poly(A) polymerase PAPa (PAPA) from Candida albicans (strain SC5314 / ATCC MYA-2876) (Yeast).